A 996-amino-acid polypeptide reads, in one-letter code: NACHT, LRR and PYD domains-containing protein 9 (996 aa).

The Pyrin domain maps to 1–94 (MAESFFSDFG…WRKARNEIRQ (94 aa)). One can recognise an NACHT domain in the interval 150-469 (PTVVLHGPEG…FYMFTRPKDP (320 aa)). 156 to 163 (GPEGIGKT) serves as a coordination point for ATP. LRR repeat units lie at residues 748–769 (KLNLLSLCENALKDDGVLVLCE), 777–798 (ALEALLLSHCCFSSAACDHLSQ), 805–825 (SLTFLDLGSNVLKDEGVTTLC), 834–855 (NLQELWLMNCYFTSVCCVDIAT), 862–883 (KLKTLKLGNNKIYDAGAKQLCK), and 891–914 (KLENLGLEACELSPASCEDLASAL).

The protein belongs to the NLRP family. As to quaternary structure, sensor component of NLRP9 inflammasomes. Inflammasomes are supramolecular complexes that assemble in the cytosol in response to pathogens, such as rotavirus, and play critical roles in innate immunity and inflammation. The core of NLRP9 inflammasomes consists of a signal sensor component (NLRP9), an adapter (ASC/PYCARD), which recruits an effector pro-inflammatory caspase (CASP1). Within the complex, NLRP9 and PYCARD interact via their respective DAPIN/pyrin domains. This interaction initiates speck formation (nucleation) which greatly enhances further addition of soluble PYCARD molecules to the speck in a prion-like polymerization process. Clustered PYCARD nucleates the formation of CASP1 filaments through the interaction of their respective CARD domains, acting as a platform for CASP1 polymerization. CASP1 filament formation increases local enzyme concentration, resulting in trans-autocleavage and activation. Active CASP1 then processes IL1B and IL18 precursors, leading to the release of mature cytokines in the extracellular milieu and inflammatory response. Interacts with DHX9 upon rotavirus infection; this interaction may trigger inflammasome activation and inflammatory response. Detected exclusively in testis and ovary, and at high level in the oocyte from antral follicles.

It localises to the cytoplasm. Its subcellular location is the inflammasome. As the sensor component of the NLRP9 inflammasome, plays a crucial role in innate immunity and inflammation. In response to pathogens, including rotavirus, initiates the formation of the inflammasome polymeric complex, made of NLRP9, PYCARD and CASP1. Recruitment of proCASP1 to the inflammasome promotes its activation and CASP1-catalyzed IL1B and IL18 maturation and release in the extracellular milieu. The active cytokines stimulate inflammatory responses. Inflammasomes can also induce pyroptosis, an inflammatory form of programmed cell death. NLRP9 inflammasome activation may be initiated by DHX9 interaction with viral double-stranded RNA (dsRNA), preferentially to short dsRNA segments. This is NACHT, LRR and PYD domains-containing protein 9 (NLRP9) from Bos taurus (Bovine).